An 802-amino-acid polypeptide reads, in one-letter code: Copper-exporting P-type ATPase (802 aa).

HMA domains lie at 5–70 and 72–138; these read KKTT…YGVA and ETVE…YDAS. Cu(+) is bound by residues Cys16, Cys19, Cys83, and Cys86. Transmembrane regions (helical) follow at residues 161–181, 192–212, 224–244, 256–276, 411–431, and 438–458; these read LIIS…HLFN, WFQF…FYVG, MDVL…YEMV, LYFE…YLEA, YFVP…ITLV, and PALV…LGLA. Asp495 acts as the 4-aspartylphosphate intermediate in catalysis. Mg(2+) is bound by residues Asp690 and Asp694. Transmembrane regions (helical) follow at residues 748–767 and 771–790; these read LFWA…LGLL and VAGA…ALRL.

The protein belongs to the cation transport ATPase (P-type) (TC 3.A.3) family. Type IB subfamily.

The protein localises to the cell membrane. It catalyses the reaction Cu(+)(in) + ATP + H2O = Cu(+)(out) + ADP + phosphate + H(+). In terms of biological role, involved in copper export. This Staphylococcus aureus (strain USA300 / TCH1516) protein is Copper-exporting P-type ATPase (copA).